Here is a 65-residue protein sequence, read N- to C-terminus: Large ribosomal subunit protein bL35 (65 aa).

Residues 1-15 (MPKMKTKKSASKRFT) show a composition bias toward basic residues. The disordered stretch occupies residues 1 to 27 (MPKMKTKKSASKRFTARPNGSFKRGQA).

This sequence belongs to the bacterial ribosomal protein bL35 family.

The protein is Large ribosomal subunit protein bL35 of Cupriavidus pinatubonensis (strain JMP 134 / LMG 1197) (Cupriavidus necator (strain JMP 134)).